The primary structure comprises 262 residues: MAVGKNKRISKGRKGGKKKIVDPFAKKDWYDIKAPSSFTHRNVGKTLVSRTQGTKIASEGLKHRVFEVSLADLNKDEDQAYRKIRLRAEDVQGRNVLTQFWGMDFTTDKLRSLVKKWQTLIESHVDVKTTDNYTLRLFCIAFTKRRANQVKRTCYAQSSQIRQIRSKMREIMIKEEASSCDLKELVAKFIPESIGKDIEKATQGIYPLQNVFIRKVKILKAPKFDLRKLMEVHGDYTAEDVGVKVDRPADEVVEEPTEIIGA.

It belongs to the eukaryotic ribosomal protein eS1 family. Component of the small ribosomal subunit. Mature ribosomes consist of a small (40S) and a large (60S) subunit. The 40S subunit contains about 33 different proteins and 1 molecule of RNA (18S). The 60S subunit contains about 49 different proteins and 3 molecules of RNA (25S, 5.8S and 5S).

Its subcellular location is the cytoplasm. The polypeptide is Small ribosomal subunit protein eS1 (Brassica campestris (Field mustard)).